The sequence spans 473 residues: Cephalotoxin-like protein (473 aa).

The signal sequence occupies residues 1–21 (RWLGWQKFCWISCLFSSISSG). Coiled coils occupy residues 40-60 (AINA…EALK) and 116-147 (LINE…ADTA).

Component of the acid-insoluble and acid-soluble organic matrix of the aragonitic skeleton (at protein level).

It is found in the secreted. This Acropora millepora (Staghorn coral) protein is Cephalotoxin-like protein.